A 222-amino-acid chain; its full sequence is Superoxide dismutase [Cu-Zn], chloroplastic (222 aa).

Residues 1–68 (MAAHTILASA…AASKPLTIVA (68 aa)) constitute a chloroplast transit peptide. The Cu cation site is built by H114, H116, and H131. The cysteines at positions 125 and 214 are disulfide-linked. 4 residues coordinate Zn(2+): H131, H139, H148, and D151. H188 is a binding site for Cu cation.

Belongs to the Cu-Zn superoxide dismutase family. Homotetramer. The cofactor is Cu cation. Zn(2+) serves as cofactor.

The protein localises to the plastid. Its subcellular location is the chloroplast. The enzyme catalyses 2 superoxide + 2 H(+) = H2O2 + O2. Its function is as follows. Destroys radicals which are normally produced within the cells and which are toxic to biological systems. The chain is Superoxide dismutase [Cu-Zn], chloroplastic (SODCP) from Spinacia oleracea (Spinach).